The following is a 495-amino-acid chain: Cobyric acid synthase (495 aa).

A GATase cobBQ-type domain is found at 258–427 (GLRVAAVRLP…WHGLFDNDGF (170 aa)). The active-site Nucleophile is cysteine 339. Histidine 419 is a catalytic residue.

This sequence belongs to the CobB/CobQ family. CobQ subfamily.

It participates in cofactor biosynthesis; adenosylcobalamin biosynthesis. Its function is as follows. Catalyzes amidations at positions B, D, E, and G on adenosylcobyrinic A,C-diamide. NH(2) groups are provided by glutamine, and one molecule of ATP is hydrogenolyzed for each amidation. In Mycobacterium sp. (strain KMS), this protein is Cobyric acid synthase.